The sequence spans 573 residues: Arginine--tRNA ligase (573 aa).

The 'HIGH' region signature appears at 122 to 132 (PNLAKEMHVGH).

This sequence belongs to the class-I aminoacyl-tRNA synthetase family. Monomer.

The protein localises to the cytoplasm. The catalysed reaction is tRNA(Arg) + L-arginine + ATP = L-arginyl-tRNA(Arg) + AMP + diphosphate. This chain is Arginine--tRNA ligase, found in Laribacter hongkongensis (strain HLHK9).